The primary structure comprises 420 residues: UDP-glucuronic acid decarboxylase 1 (420 aa).

Methionine 1 is modified (N-acetylmethionine). Over 1-19 the chain is Cytoplasmic; that stretch reads MVSKALLRLVSAVNRRRMK. The helical; Signal-anchor for type II membrane protein transmembrane segment at 20–40 threads the bilayer; that stretch reads LLLGIALLAYVASVWGNFVNM. The Lumenal segment spans residues 41-420; it reads RSIQENGELK…RIKKGRTRHN (380 aa). Threonine 94 is modified (phosphothreonine). The NAD(+) site is built by glycine 98, phenylalanine 99, valine 100, aspartate 119, asparagine 120, phenylalanine 122, threonine 123, glycine 124, aspartate 144, and valine 145. UDP-alpha-D-glucuronate contacts are provided by leucine 149 and tyrosine 150. Residues leucine 159 and serine 161 each contribute to the NAD(+) site. Lysine 177 is a binding site for UDP-alpha-D-glucuronate. Threonine 178 lines the NAD(+) pocket. UDP-alpha-D-glucuronate contacts are provided by asparagine 185, glycine 188, lysine 191, and arginine 192. Residues alanine 200, tyrosine 231, and lysine 235 each coordinate NAD(+). The active-site Proton acceptor is tyrosine 231. UDP-alpha-D-glucuronate contacts are provided by tyrosine 245, glutamine 248, and glutamate 249. NAD(+)-binding residues include threonine 261, histidine 267, and arginine 272. The N-linked (GlcNAc...) asparagine glycan is linked to asparagine 316.

The protein belongs to the NAD(P)-dependent epimerase/dehydratase family. UDP-glucuronic acid decarboxylase subfamily. Homodimer and homotetramer. Interacts with AKT1. NAD(+) serves as cofactor.

It localises to the golgi apparatus. Its subcellular location is the golgi stack membrane. It catalyses the reaction UDP-alpha-D-glucuronate + H(+) = UDP-alpha-D-xylose + CO2. The protein operates within nucleotide-sugar biosynthesis; UDP-alpha-D-xylose biosynthesis; UDP-alpha-D-xylose from UDP-alpha-D-glucuronate: step 1/1. Its function is as follows. Catalyzes the NAD-dependent decarboxylation of UDP-glucuronic acid to UDP-xylose. Necessary for the biosynthesis of the core tetrasaccharide in glycosaminoglycan biosynthesis. This Pongo abelii (Sumatran orangutan) protein is UDP-glucuronic acid decarboxylase 1 (UXS1).